An 80-amino-acid polypeptide reads, in one-letter code: Acyl carrier protein (80 aa).

One can recognise a Carrier domain in the interval 4 to 79; it reads EAILEKVRSI…DAVKYIEDKQ (76 aa). Residue Ser-39 is modified to O-(pantetheine 4'-phosphoryl)serine.

Belongs to the acyl carrier protein (ACP) family. Post-translationally, 4'-phosphopantetheine is transferred from CoA to a specific serine of apo-ACP by AcpS. This modification is essential for activity because fatty acids are bound in thioester linkage to the sulfhydryl of the prosthetic group.

It localises to the cytoplasm. Its pathway is lipid metabolism; fatty acid biosynthesis. Functionally, carrier of the growing fatty acid chain in fatty acid biosynthesis. This is Acyl carrier protein from Synechococcus sp. (strain CC9902).